The following is a 129-amino-acid chain: Small ribosomal subunit protein uS11 (129 aa).

It belongs to the universal ribosomal protein uS11 family. In terms of assembly, part of the 30S ribosomal subunit. Interacts with proteins S7 and S18. Binds to IF-3.

Located on the platform of the 30S subunit, it bridges several disparate RNA helices of the 16S rRNA. Forms part of the Shine-Dalgarno cleft in the 70S ribosome. The chain is Small ribosomal subunit protein uS11 from Pasteurella multocida (strain Pm70).